A 383-amino-acid polypeptide reads, in one-letter code: Glucose-1-phosphate adenylyltransferase (383 aa).

Alpha-D-glucose 1-phosphate is bound by residues Y100, G165, E180–K181, and S191.

The protein belongs to the bacterial/plant glucose-1-phosphate adenylyltransferase family. In terms of assembly, homotetramer.

It carries out the reaction alpha-D-glucose 1-phosphate + ATP + H(+) = ADP-alpha-D-glucose + diphosphate. It participates in glycan biosynthesis; glycogen biosynthesis. Functionally, involved in the biosynthesis of ADP-glucose, a building block required for the elongation reactions to produce glycogen. Catalyzes the reaction between ATP and alpha-D-glucose 1-phosphate (G1P) to produce pyrophosphate and ADP-Glc. The polypeptide is Glucose-1-phosphate adenylyltransferase (Clostridium kluyveri (strain ATCC 8527 / DSM 555 / NBRC 12016 / NCIMB 10680 / K1)).